A 210-amino-acid chain; its full sequence is Orotate phosphoribosyltransferase (210 aa).

Residues R96, K100, H102, and 122 to 130 contribute to the 5-phospho-alpha-D-ribose 1-diphosphate site; that span reads DDLISTGGS. Residue S126 participates in orotate binding.

The protein belongs to the purine/pyrimidine phosphoribosyltransferase family. PyrE subfamily. Homodimer. It depends on Mg(2+) as a cofactor.

The catalysed reaction is orotidine 5'-phosphate + diphosphate = orotate + 5-phospho-alpha-D-ribose 1-diphosphate. Its pathway is pyrimidine metabolism; UMP biosynthesis via de novo pathway; UMP from orotate: step 1/2. Catalyzes the transfer of a ribosyl phosphate group from 5-phosphoribose 1-diphosphate to orotate, leading to the formation of orotidine monophosphate (OMP). The sequence is that of Orotate phosphoribosyltransferase from Levilactobacillus brevis (strain ATCC 367 / BCRC 12310 / CIP 105137 / JCM 1170 / LMG 11437 / NCIMB 947 / NCTC 947) (Lactobacillus brevis).